A 593-amino-acid chain; its full sequence is Pyruvate kinase isozyme A, chloroplastic (593 aa).

Residues 57-94 (DEPQSSPVLVSENGSGGVLSSATQEYGRNAAPGTDSSS) form a disordered region. Substrate is bound at residue Arg-144. The K(+) site is built by Asn-146, Asp-178, and Thr-179. ATP is bound at residue 146–149 (NMCH). A Mg(2+)-binding site is contributed by Glu-343. Positions 366, 367, and 399 each coordinate substrate. Asp-367 contributes to the Mg(2+) binding site.

This sequence belongs to the pyruvate kinase family. Mg(2+) serves as cofactor. The cofactor is K(+). In terms of tissue distribution, highest levels in roots. Also found in stems, leaves and flowers.

The protein localises to the plastid. It localises to the chloroplast. The catalysed reaction is pyruvate + ATP = phosphoenolpyruvate + ADP + H(+). It participates in carbohydrate degradation; glycolysis; pyruvate from D-glyceraldehyde 3-phosphate: step 5/5. The chain is Pyruvate kinase isozyme A, chloroplastic from Nicotiana tabacum (Common tobacco).